Reading from the N-terminus, the 51-residue chain is Large ribosomal subunit protein eL39 (51 aa).

The interval 32–51 (KRRVTRSPTRRHWRRVKLKA) is disordered.

Belongs to the eukaryotic ribosomal protein eL39 family.

In Pyrobaculum arsenaticum (strain DSM 13514 / JCM 11321 / PZ6), this protein is Large ribosomal subunit protein eL39.